A 143-amino-acid chain; its full sequence is Large ribosomal subunit protein uL15 (143 aa).

Residues 1–52 are disordered; sequence MELNTIQPADGAKHYKRRVGRGIGSGLGKTAGRGHKGQKSRSGGFHKVGFEG. Gly residues predominate over residues 21–31; it reads RGIGSGLGKTA.

Belongs to the universal ribosomal protein uL15 family. As to quaternary structure, part of the 50S ribosomal subunit.

Its function is as follows. Binds to the 23S rRNA. The polypeptide is Large ribosomal subunit protein uL15 (Herminiimonas arsenicoxydans).